We begin with the raw amino-acid sequence, 528 residues long: ATP synthase subunit beta 2 (528 aa).

Polar residues predominate over residues 1–10 (MADPQATNGT). Positions 1-27 (MADPQATNGTGAACAERDASDVGDARD) are disordered. The segment covering 15-27 (AERDASDVGDARD) has biased composition (basic and acidic residues). Residue 179–186 (GGAGVGKT) coordinates ATP. Over residues 488-499 (AAAREADARREA) the composition is skewed to basic and acidic residues. The interval 488-528 (AAAREADARREAAAAASGAGPGTTSDPASGSAEPQGARHGR) is disordered.

It belongs to the ATPase alpha/beta chains family. F-type ATPases have 2 components, CF(1) - the catalytic core - and CF(0) - the membrane proton channel. CF(1) has five subunits: alpha(3), beta(3), gamma(1), delta(1), epsilon(1). CF(0) has three main subunits: a(1), b(2) and c(9-12). The alpha and beta chains form an alternating ring which encloses part of the gamma chain. CF(1) is attached to CF(0) by a central stalk formed by the gamma and epsilon chains, while a peripheral stalk is formed by the delta and b chains.

Its subcellular location is the cell inner membrane. It carries out the reaction ATP + H2O + 4 H(+)(in) = ADP + phosphate + 5 H(+)(out). Functionally, produces ATP from ADP in the presence of a proton gradient across the membrane. The catalytic sites are hosted primarily by the beta subunits. The polypeptide is ATP synthase subunit beta 2 (Burkholderia pseudomallei (strain 1106a)).